The chain runs to 937 residues: Vacuolar membrane protease (937 aa).

At 1–16 the chain is on the cytoplasmic side; sequence PNGFVKFIRSIFGYRK. The helical transmembrane segment at 17–37 threads the bilayer; the sequence is TSLTLFVILTYVAVLLLAYLD. The Vacuolar portion of the chain corresponds to 38-373; it reads HSLYYSVDLP…FPTSQVVVAS (336 aa). N-linked (GlcNAc...) asparagine glycans are attached at residues N106 and N140. 2 residues coordinate Zn(2+): H154 and D166. The Proton acceptor role is filled by E201. Positions 202, 227, and 300 each coordinate Zn(2+). A helical membrane pass occupies residues 374–394; that stretch reads ILLLVLIPGISIPFLIIIFGY. The Cytoplasmic portion of the chain corresponds to 395–407; the sequence is KKNWELSFVNVTK. Residues 408–428 form a helical membrane-spanning segment; the sequence is FPISLAISAALLNLFTNGFIV. The Vacuolar portion of the chain corresponds to 429–437; sequence PFNQFLPNS. A helical transmembrane segment spans residues 438-458; that stretch reads SPFALVAILFATFLLLNYLIL. Topologically, residues 459 to 475 are cytoplasmic; sequence NGINLIFVSYKIVNHDE. The helical transmembrane segment at 476–496 threads the bilayer; the sequence is KLISIIETSFLYWVVLIYSTA. The Vacuolar segment spans residues 497-510; sequence KLANNVIGDDHSGE. Residues 511–531 traverse the membrane as a helical segment; that stretch reads FPIIFLCALQAVASIFGLIGW. Residues 532–580 lie on the Cytoplasmic side of the membrane; sequence SFKPVPKEHYVVVPQEEAEPLLGSSDNFNYGSPDVEDDRLVSDGSYDWS. The chain crosses the membrane as a helical span at residues 581–601; it reads IQFLTIVPISTYLIYNSGFLV. The Vacuolar portion of the chain corresponds to 602 to 618; it reads VDGINKSIQESLISQNL. N606 carries an N-linked (GlcNAc...) asparagine glycan. Residues 619–639 form a helical membrane-spanning segment; sequence IYKLLQTFAISLSIPLLPFIF. At 640–643 the chain is on the cytoplasmic side; the sequence is KVNR. Residues 644–664 traverse the membrane as a helical segment; sequence LFVLALFLISTIGVLFVATAD. Over 665-937 the chain is Vacuolar; that stretch reads SFNVANPLKL…LVSVSKTVEL (273 aa). 3 N-linked (GlcNAc...) asparagine glycosylation sites follow: N758, N870, and N887.

Belongs to the peptidase M28 family. It depends on Zn(2+) as a cofactor.

The protein localises to the vacuole membrane. Its function is as follows. May be involved in vacuolar sorting and osmoregulation. This Scheffersomyces stipitis (strain ATCC 58785 / CBS 6054 / NBRC 10063 / NRRL Y-11545) (Yeast) protein is Vacuolar membrane protease.